A 168-amino-acid chain; its full sequence is uncharacterized protein (168 aa).

An N-acetyltransferase domain is found at 7–168; the sequence is ERIDTLKTGD…TAKGWPDISM (162 aa).

This is an uncharacterized protein from Azospirillum brasilense.